Reading from the N-terminus, the 151-residue chain is MSTPEKRPVSFFSLFNRGQHYAKTWPLDKRLAPVFIENRIIRATRYAIRIMPPIAIFTLCWQIALGGQLGPAVATALFALSLPMQGLWWLGKRSVTPLPPSILNWFYEVRGKLQEAGQALAPVEGKPDYQALADTLKRAFKQLDKTFLDDL.

2 helical membrane passes run 46–65 (YAIR…QIAL) and 69–91 (LGPA…WWLG).

The protein belongs to the UPF0208 family.

Its subcellular location is the cell inner membrane. The protein is UPF0208 membrane protein KPN78578_26420 of Klebsiella pneumoniae subsp. pneumoniae (strain ATCC 700721 / MGH 78578).